The sequence spans 102 residues: Integration host factor subunit beta (102 aa).

It belongs to the bacterial histone-like protein family. As to quaternary structure, heterodimer of an alpha and a beta chain.

Functionally, this protein is one of the two subunits of integration host factor, a specific DNA-binding protein that functions in genetic recombination as well as in transcriptional and translational control. The polypeptide is Integration host factor subunit beta (Marinomonas sp. (strain MWYL1)).